The sequence spans 284 residues: Flavin-dependent thymidylate synthase (284 aa).

A ThyX domain is found at 27–237 (GFIRVVDYMG…PLAYNAFVEY (211 aa)). FAD contacts are provided by residues threonine 73, 96–98 (RHR), and glutamate 104. DUMP-binding positions include 93–96 (QWIR) and 104–108 (EYSAR). The ThyX motif motif lies at 96–106 (RHRTANVNEYS). Residues 122–142 (EQVAKQSDNNKQGSGEAFDPD) are disordered. Polar residues predominate over residues 125-134 (AKQSDNNKQG). Arginine 176 lines the dUMP pocket. FAD-binding positions include 192–194 (DLH) and histidine 198. DUMP is bound at residue arginine 203. Arginine 203 serves as the catalytic Involved in ionization of N3 of dUMP, leading to its activation.

It belongs to the thymidylate synthase ThyX family. Homotetramer. The cofactor is FAD.

It carries out the reaction dUMP + (6R)-5,10-methylene-5,6,7,8-tetrahydrofolate + NADPH + H(+) = dTMP + (6S)-5,6,7,8-tetrahydrofolate + NADP(+). It functions in the pathway pyrimidine metabolism; dTTP biosynthesis. In terms of biological role, catalyzes the reductive methylation of 2'-deoxyuridine-5'-monophosphate (dUMP) to 2'-deoxythymidine-5'-monophosphate (dTMP) while utilizing 5,10-methylenetetrahydrofolate (mTHF) as the methyl donor, and NADPH and FADH(2) as the reductant. The sequence is that of Flavin-dependent thymidylate synthase from Wolbachia pipientis wMel.